We begin with the raw amino-acid sequence, 212 residues long: ATP-dependent Clp protease proteolytic subunit 2 (212 aa).

Positions 1–20 (MSHNTSIASQGMPAMAGPET) are disordered. The Nucleophile role is filled by serine 107. The active site involves histidine 132.

The protein belongs to the peptidase S14 family. In terms of assembly, fourteen ClpP subunits assemble into 2 heptameric rings which stack back to back to give a disk-like structure with a central cavity, resembling the structure of eukaryotic proteasomes.

Its subcellular location is the cytoplasm. It carries out the reaction Hydrolysis of proteins to small peptides in the presence of ATP and magnesium. alpha-casein is the usual test substrate. In the absence of ATP, only oligopeptides shorter than five residues are hydrolyzed (such as succinyl-Leu-Tyr-|-NHMec, and Leu-Tyr-Leu-|-Tyr-Trp, in which cleavage of the -Tyr-|-Leu- and -Tyr-|-Trp bonds also occurs).. Functionally, cleaves peptides in various proteins in a process that requires ATP hydrolysis. Has a chymotrypsin-like activity. Plays a major role in the degradation of misfolded proteins. The chain is ATP-dependent Clp protease proteolytic subunit 2 from Cutibacterium acnes (strain DSM 16379 / KPA171202) (Propionibacterium acnes).